The following is a 378-amino-acid chain: Acetylornithine deacetylase (378 aa).

Histidine 76 lines the Zn(2+) pocket. Residue aspartate 78 is part of the active site. Aspartate 108 serves as a coordination point for Zn(2+). The active site involves glutamate 140. Zn(2+)-binding residues include glutamate 141, glutamate 165, and histidine 351.

Belongs to the peptidase M20A family. ArgE subfamily. As to quaternary structure, homodimer. Zn(2+) is required as a cofactor. It depends on Co(2+) as a cofactor. Glutathione serves as cofactor.

Its subcellular location is the cytoplasm. It catalyses the reaction N(2)-acetyl-L-ornithine + H2O = L-ornithine + acetate. The protein operates within amino-acid biosynthesis; L-arginine biosynthesis; L-ornithine from N(2)-acetyl-L-ornithine (linear): step 1/1. In terms of biological role, catalyzes the hydrolysis of the amide bond of N(2)-acetylated L-amino acids. Cleaves the acetyl group from N-acetyl-L-ornithine to form L-ornithine, an intermediate in L-arginine biosynthesis pathway, and a branchpoint in the synthesis of polyamines. In Aliivibrio fischeri (strain ATCC 700601 / ES114) (Vibrio fischeri), this protein is Acetylornithine deacetylase.